Here is a 321-residue protein sequence, read N- to C-terminus: Hydropyrene synthase (321 aa).

Residues aspartate 82, asparagine 225, serine 229, and glutamate 233 each coordinate Mg(2+). The short motif at 82–87 is the DDxx(x)D/E motif element; it reads DDRAID. The NDxxSxxxD/E motif motif lies at 225–233; the sequence is NDLHSFARE.

Belongs to the terpene synthase family. It depends on Mg(2+) as a cofactor.

It catalyses the reaction (2E,6E,10E)-geranylgeranyl diphosphate = hydropyrene + diphosphate. The catalysed reaction is (2E,6E,10E)-geranylgeranyl diphosphate + H2O = hydropyrenol + diphosphate. It carries out the reaction (2E,6E,10E)-geranylgeranyl diphosphate = isoelisabethatriene + diphosphate. Its pathway is secondary metabolite biosynthesis; terpenoid biosynthesis. In terms of biological role, terpene synthase that catalyzes the conversion of geranylgeranyl diphosphate (GGPP) into a mixture of diterpenes, including hydropyrene (HP), hydropyrenol (HPol), isoelisabethatriene and traces of isoelisabethatriene B. Hydropyrene is the main product. Some other diterpenoids are also produced in very low quantities. This chain is Hydropyrene synthase, found in Streptomyces clavuligerus.